A 1084-amino-acid polypeptide reads, in one-letter code: Ribonucleoside-diphosphate reductase NrdEB subunit alpha (1084 aa).

Residues Thr152, 168-169 (SC), and Gly197 contribute to the substrate site. A disulfide bond links Cys169 and Cys793. Catalysis depends on Asn379, which acts as the Proton acceptor. Cys381 serves as the catalytic Cysteine radical intermediate. The DOD-type homing endonuclease domain maps to 503 to 654 (IMGIIAGDGT…VQKLLLNMGV (152 aa)). The active-site Proton acceptor is the Glu768. 964–968 (PTGSI) lines the substrate pocket.

The protein belongs to the ribonucleoside diphosphate reductase large chain family. Tetramer of two alpha and two beta subunits. This protein undergoes protein self-splicing that involves post-translational excision of the intervening region (intein) followed by peptide ligation.

The catalysed reaction is a 2'-deoxyribonucleoside 5'-diphosphate + [thioredoxin]-disulfide + H2O = a ribonucleoside 5'-diphosphate + [thioredoxin]-dithiol. Under complex allosteric control mediated by deoxynucleoside triphosphates and ATP binding. The type of nucleotide bound at the specificity site determines substrate preference. It seems probable that ATP makes the enzyme reduce CDP and UDP, dGTP favors ADP reduction and dTTP favors GDP reduction. Its function is as follows. Provides the precursors necessary for DNA synthesis. Catalyzes the biosynthesis of deoxyribonucleotides from the corresponding ribonucleotides. The chain is Ribonucleoside-diphosphate reductase NrdEB subunit alpha (nrdEB) from Bacillus subtilis (strain 168).